We begin with the raw amino-acid sequence, 137 residues long: Large ribosomal subunit protein uL16 (137 aa).

A disordered region spans residues 1-20 (MLQPSNRKYRKDFKGRNRGV). Basic residues predominate over residues 7–17 (RKYRKDFKGRN).

This sequence belongs to the universal ribosomal protein uL16 family. As to quaternary structure, part of the 50S ribosomal subunit.

Functionally, binds 23S rRNA and is also seen to make contacts with the A and possibly P site tRNAs. This Coxiella burnetii (strain CbuG_Q212) (Coxiella burnetii (strain Q212)) protein is Large ribosomal subunit protein uL16.